The primary structure comprises 102 residues: NADH-quinone oxidoreductase subunit K (102 aa).

A run of 3 helical transmembrane segments spans residues leucine 6–alanine 26, methionine 30–alanine 50, and methionine 63–leucine 83.

Belongs to the complex I subunit 4L family. As to quaternary structure, NDH-1 is composed of 14 different subunits. Subunits NuoA, H, J, K, L, M, N constitute the membrane sector of the complex.

Its subcellular location is the cell inner membrane. The catalysed reaction is a quinone + NADH + 5 H(+)(in) = a quinol + NAD(+) + 4 H(+)(out). Its function is as follows. NDH-1 shuttles electrons from NADH, via FMN and iron-sulfur (Fe-S) centers, to quinones in the respiratory chain. The immediate electron acceptor for the enzyme in this species is believed to be ubiquinone. Couples the redox reaction to proton translocation (for every two electrons transferred, four hydrogen ions are translocated across the cytoplasmic membrane), and thus conserves the redox energy in a proton gradient. In Rhodopseudomonas palustris (strain TIE-1), this protein is NADH-quinone oxidoreductase subunit K.